A 320-amino-acid polypeptide reads, in one-letter code: Protein phosphatase PTC7 homolog fig (320 aa).

The region spanning 49–315 is the PPM-type phosphatase domain; it reads PYLVTAVQGR…DDITLILASV (267 aa). Asp93, Gly94, and Asp238 together coordinate Mn(2+).

Belongs to the PP2C family. It depends on Mg(2+) as a cofactor. Mn(2+) is required as a cofactor.

The enzyme catalyses O-phospho-L-seryl-[protein] + H2O = L-seryl-[protein] + phosphate. It carries out the reaction O-phospho-L-threonyl-[protein] + H2O = L-threonyl-[protein] + phosphate. The polypeptide is Protein phosphatase PTC7 homolog fig (Drosophila yakuba (Fruit fly)).